Consider the following 159-residue polypeptide: Ribosomal RNA large subunit methyltransferase H (159 aa).

Residues leucine 76, glycine 108, and 127–132 contribute to the S-adenosyl-L-methionine site; that span reads MSKMTF.

It belongs to the RNA methyltransferase RlmH family. In terms of assembly, homodimer.

It is found in the cytoplasm. The catalysed reaction is pseudouridine(1915) in 23S rRNA + S-adenosyl-L-methionine = N(3)-methylpseudouridine(1915) in 23S rRNA + S-adenosyl-L-homocysteine + H(+). Functionally, specifically methylates the pseudouridine at position 1915 (m3Psi1915) in 23S rRNA. This chain is Ribosomal RNA large subunit methyltransferase H, found in Ureaplasma parvum serovar 3 (strain ATCC 27815 / 27 / NCTC 11736).